We begin with the raw amino-acid sequence, 277 residues long: Putative phosphoenolpyruvate synthase regulatory protein (277 aa).

157 to 164 contributes to the ADP binding site; it reads GVSRSGKT.

It belongs to the pyruvate, phosphate/water dikinase regulatory protein family. PSRP subfamily.

It carries out the reaction [pyruvate, water dikinase] + ADP = [pyruvate, water dikinase]-phosphate + AMP + H(+). The catalysed reaction is [pyruvate, water dikinase]-phosphate + phosphate + H(+) = [pyruvate, water dikinase] + diphosphate. Functionally, bifunctional serine/threonine kinase and phosphorylase involved in the regulation of the phosphoenolpyruvate synthase (PEPS) by catalyzing its phosphorylation/dephosphorylation. The polypeptide is Putative phosphoenolpyruvate synthase regulatory protein (Azoarcus sp. (strain BH72)).